The chain runs to 213 residues: MLKRMRDDIKMVFEQDPAARSTLEVITTYAGLHAVWSHLIAHKLYKNRRYVAARMISQLSRFFTGIEIHPGAKIGKRLFIDHGMGVVIGETCTIGDNVTIYQGVTLGGTGKEKGKRHPDIGDNVLIAAGSKILGNIKIESNVNIGANSVVLQSVPSYTTVVGIPGHIVKQEGRRIGKTFDHRNLPDPLYEQIKHLERQLEKAKNGEIQDDYII.

It belongs to the transferase hexapeptide repeat family.

It localises to the cytoplasm. It catalyses the reaction L-serine + acetyl-CoA = O-acetyl-L-serine + CoA. The protein operates within amino-acid biosynthesis; L-cysteine biosynthesis; L-cysteine from L-serine: step 1/2. This is Serine acetyltransferase (cysE) from Staphylococcus epidermidis (strain ATCC 35984 / DSM 28319 / BCRC 17069 / CCUG 31568 / BM 3577 / RP62A).